A 179-amino-acid chain; its full sequence is Natural killer cells antigen CD94 (179 aa).

At 1 to 10 (MAVSRITRWR) the chain is on the cytoplasmic side. A helical; Signal-anchor for type II membrane protein transmembrane segment spans residues 11–31 (LMSVIFGIKCLFLMVTLGVLL). At 32–179 (INSFTIQNIQ…NRYICKKLPI (148 aa)) the chain is on the extracellular side. Cystine bridges form between Cys-58–Cys-70, Cys-61–Cys-72, Cys-89–Cys-174, and Cys-152–Cys-166. Positions 68-175 (HQCNCYFISK…CENKNRYICK (108 aa)) constitute a C-type lectin domain. N-linked (GlcNAc...) asparagine glycosylation is found at Asn-93 and Asn-109.

Can form disulfide-bonded heterodimer with NKG2 family members KLRC1 and KLRC2. KLRD1-KLRC1 heterodimer interacts with peptide-bound MHC-E-B2M heterotrimeric complex. KLRD1 plays a prominent role in directly interacting with MHC-E. KLRD1-KLRC1 interacts with much higher affinity with peptide-bound MHC-E-B2M than KLRD1-KLRC2. Interacts with the adapter protein TYROBP/DAP12; this interaction is required for cell surface expression and cell activation.

It localises to the cell membrane. In terms of biological role, immune receptor involved in self-nonself discrimination. In complex with KLRC1 or KLRC2 on cytotoxic and regulatory lymphocyte subsets, recognizes non-classical major histocompatibility (MHC) class Ib molecule MHC-E loaded with self-peptides derived from the signal sequence of classical MHC class Ia and non-classical MHC class Ib molecules. Enables cytotoxic cells to monitor the expression of MHC class I molecules in healthy cells and to tolerate self. Primarily functions as a ligand binding subunit as it lacks the capacity to signal. Functionally, KLRD1-KLRC1 acts as an immune inhibitory receptor. Key inhibitory receptor on natural killer (NK) cells that regulates their activation and effector functions. Dominantly counteracts T cell receptor signaling on a subset of memory/effector CD8-positive T cells as part of an antigen-driven response to avoid autoimmunity. On intraepithelial CD8-positive gamma-delta regulatory T cells triggers TGFB1 secretion, which in turn limits the cytotoxic programming of intraepithelial CD8-positive alpha-beta T cells, distinguishing harmless from pathogenic antigens. In MHC-E-rich tumor microenvironment, acts as an immune inhibitory checkpoint and may contribute to progressive loss of effector functions of NK cells and tumor-specific T cells, a state known as cell exhaustion. Upon MHC-E-peptide binding, transmits intracellular signals through KLRC1 immunoreceptor tyrosine-based inhibition motifs (ITIMs) by recruiting INPP5D/SHIP-1 and INPPL1/SHIP-2 tyrosine phosphatases to ITIMs, and ultimately opposing signals transmitted by activating receptors through dephosphorylation of proximal signaling molecules. KLRD1-KLRC2 acts as an immune activating receptor. On cytotoxic lymphocyte subsets recognizes MHC-E loaded with signal sequence-derived peptides from non-classical MHC class Ib MHC-G molecules, likely playing a role in the generation and effector functions of adaptive NK cells and in maternal-fetal tolerance during pregnancy. Regulates the effector functions of terminally differentiated cytotoxic lymphocyte subsets, and in particular may play a role in adaptive NK cell response to viral infection. Upon MHC-E-peptide binding, transmits intracellular signals via the adapter protein TYROBP/DAP12, triggering the phosphorylation of proximal signaling molecules and cell activation. This chain is Natural killer cells antigen CD94 (Klrd1), found in Mus musculus (Mouse).